Consider the following 422-residue polypeptide: MLRDTQIFTLIEKEYQRQNEGLELIASENFVSQQIMEAAGSILTNKYAEGLPGRRYYGGCEIVDEIETLAIERAKSLFHASWANVQPHSGSQANAAVMFAVLEPGDKILGFNLAHGGHLTHGSPVNFSGQLYESHFYGVQPETGLIDWEEVGTIAEQVNPKLIICGASAYSRDWDYKRLRAIADQVGALLLADISHPAGLISRGLLNDPVPYCHFITTTTHKTLRGPRGGMILMGADFENPFGKKTTKGKLKSMSTLLDASVFPGIQGGPLEHIIAAKAIAFQEAMSDDYFNYILQVQKNTRQLAQSFVKRGYNIVSGGTDNHLILIDLRNKGITGKLAEEALIKASITLNKNMVPFDDQSPLITSGIRIGTPAVTTRGMQETDMEQIAAWIDDVLKNHENESKIDSIRKEIGNYMLQFPLP.

(6S)-5,6,7,8-tetrahydrofolate is bound by residues leucine 113 and 117 to 119; that span reads GHL. Lysine 222 carries the post-translational modification N6-(pyridoxal phosphate)lysine.

It belongs to the SHMT family. In terms of assembly, homodimer. The cofactor is pyridoxal 5'-phosphate.

The protein resides in the cytoplasm. It carries out the reaction (6R)-5,10-methylene-5,6,7,8-tetrahydrofolate + glycine + H2O = (6S)-5,6,7,8-tetrahydrofolate + L-serine. Its pathway is one-carbon metabolism; tetrahydrofolate interconversion. It functions in the pathway amino-acid biosynthesis; glycine biosynthesis; glycine from L-serine: step 1/1. Functionally, catalyzes the reversible interconversion of serine and glycine with tetrahydrofolate (THF) serving as the one-carbon carrier. This reaction serves as the major source of one-carbon groups required for the biosynthesis of purines, thymidylate, methionine, and other important biomolecules. Also exhibits THF-independent aldolase activity toward beta-hydroxyamino acids, producing glycine and aldehydes, via a retro-aldol mechanism. This is Serine hydroxymethyltransferase from Amoebophilus asiaticus (strain 5a2).